Reading from the N-terminus, the 926-residue chain is Serine/threonine-protein kinase/endoribonuclease IRE2 (926 aa).

A signal peptide spans 1 to 34; that stretch reads MASAVRGSRPWPRLGLQLQFAALLLGTLSPQVHT. Over 35–430 the chain is Lumenal; it reads LRPENLLLVS…TPDSYLGLGP (396 aa). The helical transmembrane segment at 431 to 451 threads the bilayer; sequence QDLLAASLTAVLLGGWILFVM. The Cytoplasmic portion of the chain corresponds to 452–926; sequence RQQQPQVVEK…RRPCPGATGR (475 aa). Residues 478 to 501 show a composition bias toward polar residues; that stretch reads DAQSLHSGASRRSQKRLQSPSKQA. A disordered region spans residues 478 to 509; sequence DAQSLHSGASRRSQKRLQSPSKQAQPLDDPEA. The 262-residue stretch at 520–781 folds into the Protein kinase domain; that stretch reads FNPKDVLGRG…APQVLAHPFF (262 aa). Residues 526–534 and K548 contribute to the ATP site; that span reads LGRGAGGTF. The Proton acceptor role is filled by D637. Residues 784–912 enclose the KEN domain; it reads RAKQLQFFQD…ESLFLPYYPP (129 aa).

This sequence belongs to the protein kinase superfamily. Ser/Thr protein kinase family. Mg(2+) is required as a cofactor. In terms of processing, autophosphorylated.

It localises to the endoplasmic reticulum membrane. It carries out the reaction L-seryl-[protein] + ATP = O-phospho-L-seryl-[protein] + ADP + H(+). The enzyme catalyses L-threonyl-[protein] + ATP = O-phospho-L-threonyl-[protein] + ADP + H(+). Its activity is regulated as follows. The kinase domain is activated by trans-autophosphorylation. Kinase activity is required for activation of the endoribonuclease domain. Induces translational repression through 28S ribosomal RNA cleavage in response to ER stress. Pro-apoptotic. Appears to play no role in the unfolded-protein response, unlike closely related proteins. This chain is Serine/threonine-protein kinase/endoribonuclease IRE2, found in Homo sapiens (Human).